A 141-amino-acid chain; its full sequence is Nucleoside diphosphate kinase (141 aa).

Residues lysine 11, phenylalanine 59, arginine 87, threonine 93, arginine 104, and asparagine 114 each contribute to the ATP site. Catalysis depends on histidine 117, which acts as the Pros-phosphohistidine intermediate.

It belongs to the NDK family. Homotetramer. The cofactor is Mg(2+).

It is found in the cytoplasm. It carries out the reaction a 2'-deoxyribonucleoside 5'-diphosphate + ATP = a 2'-deoxyribonucleoside 5'-triphosphate + ADP. The catalysed reaction is a ribonucleoside 5'-diphosphate + ATP = a ribonucleoside 5'-triphosphate + ADP. Its function is as follows. Major role in the synthesis of nucleoside triphosphates other than ATP. The ATP gamma phosphate is transferred to the NDP beta phosphate via a ping-pong mechanism, using a phosphorylated active-site intermediate. The chain is Nucleoside diphosphate kinase from Haemophilus influenzae (strain ATCC 51907 / DSM 11121 / KW20 / Rd).